Consider the following 428-residue polypeptide: F-box/LRR-repeat protein 3 (428 aa).

The span at 1-21 (MKRGGRDSDRNSSEEGTAEKS) shows a compositional bias: basic and acidic residues. The interval 1 to 27 (MKRGGRDSDRNSSEEGTAEKSKKLRTT) is disordered. Positions 34 to 81 (CDWGNLLQDIILQVFKYLPLLDRAHASQVCRNWNQVFHMPDLWRCFEF) constitute an F-box domain. LRR repeat units follow at residues 119–146 (SSKESAEAACDILSQLVNCSLKTLGLIS), 181–207 (DTPVDDPSLKVLVANNSDTLKLLKMSS), 208–233 (CPHVSPAGILCVADQCHGLRELALNY), 234–259 (HLLSDELLLALSSEKHVRLEHLRIDV), 316–341 (GRSVSKDVLGRVGMTCPRLVELVVCA), 343–368 (GLRPLDEELIRIAERCKNLSAIGLGE), and 369–394 (CEVSCSAFVEFVKMCGGRLSQLSIME).

In terms of assembly, part of the SCF (SKP1-CUL1-F-box) E3 ubiquitin-protein ligase complex SCF(FBXL3) composed of CUL1, SKP1, RBX1 and FBXL3. Interacts with CRY1 and CRY2 (phosphorylated). Interacts with HDAC3. Interacts with KDM8. In terms of processing, undergoes autophagy-mediated degradation in the liver in a time-dependent manner. In terms of tissue distribution, widely expressed.

It is found in the nucleus. The protein resides in the cytoplasm. It participates in protein modification; protein ubiquitination. Functionally, substrate-recognition component of the SCF(FBXL3) E3 ubiquitin ligase complex involved in circadian rhythm function. Plays a key role in the maintenance of both the speed and the robustness of the circadian clock oscillation. The SCF(FBXL3) complex mainly acts in the nucleus and mediates ubiquitination and subsequent degradation of CRY1 and CRY2. Activity of the SCF(FBXL3) complex is counteracted by the SCF(FBXL21) complex. The polypeptide is F-box/LRR-repeat protein 3 (FBXL3) (Homo sapiens (Human)).